Reading from the N-terminus, the 276-residue chain is Probable ribose-5-phosphate isomerase 3, chloroplastic (276 aa).

The N-terminal 39 residues, 1–39 (MASLSFVSSSHLTLRTPSIALRSTGSSPRTSVSFSVKAQ), are a transit peptide targeting the chloroplast. Position 40 is an N-acetylserine (Ser-40). Residue Ser-108 is modified to Phosphoserine.

It belongs to the ribose 5-phosphate isomerase family. Phosphorylated by SRK2C.

It is found in the plastid. The protein localises to the chloroplast. It carries out the reaction aldehydo-D-ribose 5-phosphate = D-ribulose 5-phosphate. Its pathway is carbohydrate degradation; pentose phosphate pathway; D-ribose 5-phosphate from D-ribulose 5-phosphate (non-oxidative stage): step 1/1. Functionally, catalyzes the reversible conversion of ribose-5-phosphate to ribulose 5-phosphate. The protein is Probable ribose-5-phosphate isomerase 3, chloroplastic (RPI3) of Arabidopsis thaliana (Mouse-ear cress).